The following is a 144-amino-acid chain: Transcription antitermination protein NusB (144 aa).

It belongs to the NusB family.

Involved in transcription antitermination. Required for transcription of ribosomal RNA (rRNA) genes. Binds specifically to the boxA antiterminator sequence of the ribosomal RNA (rrn) operons. The polypeptide is Transcription antitermination protein NusB (Streptococcus agalactiae serotype Ia (strain ATCC 27591 / A909 / CDC SS700)).